Here is a 505-residue protein sequence, read N- to C-terminus: tRNA-2-methylthio-N(6)-dimethylallyladenosine synthase (505 aa).

The MTTase N-terminal domain maps to 14–132 (RTYEVRTYGC…LPVLLERARV (119 aa)). 6 residues coordinate [4Fe-4S] cluster: Cys23, Cys61, Cys95, Cys169, Cys173, and Cys176. The Radical SAM core domain occupies 155–386 (RESAYAAWVS…ALQEEISWDE (232 aa)). A TRAM domain is found at 388–456 (KKQVGRTLEL…PHHLLAEGAV (69 aa)).

This sequence belongs to the methylthiotransferase family. MiaB subfamily. As to quaternary structure, monomer. The cofactor is [4Fe-4S] cluster.

The protein resides in the cytoplasm. It catalyses the reaction N(6)-dimethylallyladenosine(37) in tRNA + (sulfur carrier)-SH + AH2 + 2 S-adenosyl-L-methionine = 2-methylsulfanyl-N(6)-dimethylallyladenosine(37) in tRNA + (sulfur carrier)-H + 5'-deoxyadenosine + L-methionine + A + S-adenosyl-L-homocysteine + 2 H(+). Catalyzes the methylthiolation of N6-(dimethylallyl)adenosine (i(6)A), leading to the formation of 2-methylthio-N6-(dimethylallyl)adenosine (ms(2)i(6)A) at position 37 in tRNAs that read codons beginning with uridine. The chain is tRNA-2-methylthio-N(6)-dimethylallyladenosine synthase from Streptomyces coelicolor (strain ATCC BAA-471 / A3(2) / M145).